A 156-amino-acid polypeptide reads, in one-letter code: Small ribosomal subunit protein uS15 (156 aa).

The disordered stretch occupies residues 1–67 (MARMHTRRRG…GVQGTPIPDV (67 aa)). Residues 10-19 (GSSDSDKPAA) show a composition bias toward basic and acidic residues. A compositionally biased stretch (acidic residues) spans 21–32 (EPPEWSDVDEDA).

This sequence belongs to the universal ribosomal protein uS15 family. As to quaternary structure, part of the 30S ribosomal subunit.

This chain is Small ribosomal subunit protein uS15, found in Haloarcula marismortui (strain ATCC 43049 / DSM 3752 / JCM 8966 / VKM B-1809) (Halobacterium marismortui).